A 483-amino-acid polypeptide reads, in one-letter code: Glutarate-semialdehyde dehydrogenase (483 aa).

NADP(+) contacts are provided by residues 156–157 (WN), 180–183 (KPAS), and 233–234 (GS). Glu-255 acts as the Proton acceptor in catalysis. Leu-256 lines the NADP(+) pocket. Cys-289 functions as the Nucleophile in the catalytic mechanism. Residue Glu-386 coordinates NADP(+).

The protein belongs to the aldehyde dehydrogenase family.

The enzyme catalyses 5-oxopentanoate + NADP(+) + H2O = glutarate + NADPH + 2 H(+). Its pathway is amino-acid degradation. Functionally, catalyzes the conversion of 5-oxopentanoate (glutarate semialdehyde) to glutarate. Involved in L-lysine degradation. This chain is Glutarate-semialdehyde dehydrogenase, found in Pseudomonas aeruginosa (strain ATCC 15692 / DSM 22644 / CIP 104116 / JCM 14847 / LMG 12228 / 1C / PRS 101 / PAO1).